The sequence spans 760 residues: Photosystem I P700 chlorophyll a apoprotein A1 (760 aa).

The disordered stretch occupies residues 1-22 (MTISPPESGEKDKKILESPVKA). Over residues 8–22 (SGEKDKKILESPVKA) the composition is skewed to basic and acidic residues. 8 helical membrane-spanning segments follow: residues 76 to 99 (IFSA…FHGA), 162 to 185 (LMAL…FHYH), 201 to 225 (MNHH…HIGA), 309 to 327 (IAHH…GHMY), 368 to 391 (RHAQ…HHMY), 407 to 433 (LGLF…IAMV), 455 to 477 (ALIS…LYIH), and 551 to 569 (LMIH…LILL). [4Fe-4S] cluster is bound by residues cysteine 593 and cysteine 602. 2 helical membrane passes run 609 to 630 (HVFL…HFSW) and 674 to 696 (ISMY…MFLF). Residue histidine 685 coordinates divinylchlorophyll a'. Divinyl chlorophyll a-binding residues include methionine 693 and tyrosine 701. Tryptophan 702 is a binding site for phylloquinone. A helical transmembrane segment spans residues 734 to 754 (AVGVTHFLVGGIATTWAFFHA).

The protein belongs to the PsaA/PsaB family. As to quaternary structure, the PsaA/B heterodimer binds the P700 divinyl chlorophyll special pair and subsequent electron acceptors. PSI consists of a core antenna complex that captures photons, and an electron transfer chain that converts photonic excitation into a charge separation. The cyanobacterial PSI reaction center is composed of one copy each of PsaA,B,C,D,E,F,I,J,K,L,M and X, and forms trimeric complexes. PSI electron transfer chain: 5 divinyl chlorophyll a, 1 divinyl chlorophyll a', 2 phylloquinones and 3 4Fe-4S clusters. PSI core antenna: 90 divinyl chlorophyll a, 22 carotenoids, 3 phospholipids and 1 galactolipid. P700 is a divinyl chlorophyll a/divinyl chlorophyll a' dimer, A0 is one or more divinyl chlorophyll a, A1 is one or both phylloquinones and FX is a shared 4Fe-4S iron-sulfur center. is required as a cofactor.

Its subcellular location is the cellular thylakoid membrane. It carries out the reaction reduced [plastocyanin] + hnu + oxidized [2Fe-2S]-[ferredoxin] = oxidized [plastocyanin] + reduced [2Fe-2S]-[ferredoxin]. Functionally, psaA and PsaB bind P700, the primary electron donor of photosystem I (PSI), as well as the electron acceptors A0, A1 and FX. PSI is a plastocyanin/cytochrome c6-ferredoxin oxidoreductase, converting photonic excitation into a charge separation, which transfers an electron from the donor P700 chlorophyll pair to the spectroscopically characterized acceptors A0, A1, FX, FA and FB in turn. Oxidized P700 is reduced on the lumenal side of the thylakoid membrane by plastocyanin or cytochrome c6. The sequence is that of Photosystem I P700 chlorophyll a apoprotein A1 from Prochlorococcus marinus (strain MIT 9515).